A 241-amino-acid polypeptide reads, in one-letter code: Class B acid phosphatase (241 aa).

An N-terminal signal peptide occupies residues 1-27; sequence MFITTKKSLIALVLATAGLISSPVSFA. D72 serves as the catalytic Nucleophile. Positions 72 and 74 each coordinate Mg(2+). D74 serves as the catalytic Proton donor. Substrate is bound by residues 141–142 and K181; that span reads TG. A Mg(2+)-binding site is contributed by D196.

This sequence belongs to the class B bacterial acid phosphatase family. Homotetramer. Requires Mg(2+) as cofactor.

It localises to the periplasm. The enzyme catalyses a phosphate monoester + H2O = an alcohol + phosphate. Its function is as follows. Dephosphorylates several organic phosphate monoesters. Also has a phosphotransferase activity catalyzing the transfer of low-energy phosphate groups from organic phosphate monoesters to free hydroxyl groups of various organic compounds. In Edwardsiella ictaluri (strain 93-146), this protein is Class B acid phosphatase.